A 429-amino-acid chain; its full sequence is Glutamyl-tRNA reductase (429 aa).

Substrate is bound by residues 49 to 52 (TCNR), S107, 112 to 114 (EPQ), and Q118. C50 serves as the catalytic Nucleophile. 187 to 192 (GAGKTI) serves as a coordination point for NADP(+).

It belongs to the glutamyl-tRNA reductase family. As to quaternary structure, homodimer.

It catalyses the reaction (S)-4-amino-5-oxopentanoate + tRNA(Glu) + NADP(+) = L-glutamyl-tRNA(Glu) + NADPH + H(+). Its pathway is porphyrin-containing compound metabolism; protoporphyrin-IX biosynthesis; 5-aminolevulinate from L-glutamyl-tRNA(Glu): step 1/2. Its function is as follows. Catalyzes the NADPH-dependent reduction of glutamyl-tRNA(Glu) to glutamate 1-semialdehyde (GSA). This chain is Glutamyl-tRNA reductase, found in Marinobacter nauticus (strain ATCC 700491 / DSM 11845 / VT8) (Marinobacter aquaeolei).